The primary structure comprises 134 residues: Glycine cleavage system H protein (134 aa).

In terms of domain architecture, Lipoyl-binding spans 24–106 (TVRVGITDYA…YGAGWLLDIQ (83 aa)). Lysine 65 bears the N6-lipoyllysine mark.

This sequence belongs to the GcvH family. As to quaternary structure, the glycine cleavage system is composed of four proteins: P, T, L and H. (R)-lipoate is required as a cofactor.

The glycine cleavage system catalyzes the degradation of glycine. The H protein shuttles the methylamine group of glycine from the P protein to the T protein. The chain is Glycine cleavage system H protein from Mycobacterium tuberculosis (strain ATCC 25177 / H37Ra).